A 288-amino-acid polypeptide reads, in one-letter code: ATP synthase gamma chain (288 aa).

The protein belongs to the ATPase gamma chain family. As to quaternary structure, F-type ATPases have 2 components, CF(1) - the catalytic core - and CF(0) - the membrane proton channel. CF(1) has five subunits: alpha(3), beta(3), gamma(1), delta(1), epsilon(1). CF(0) has three main subunits: a, b and c.

Its subcellular location is the cell inner membrane. Functionally, produces ATP from ADP in the presence of a proton gradient across the membrane. The gamma chain is believed to be important in regulating ATPase activity and the flow of protons through the CF(0) complex. The polypeptide is ATP synthase gamma chain (Actinobacillus pleuropneumoniae serotype 3 (strain JL03)).